Consider the following 196-residue polypeptide: MVVILIIDNYDSFTHNLYQLAGEILRDEGMDEEIMVLRNDEARISDLRALDPEKIIISPGPGNPSRRSDFGVCMDVIGEFTDRPLLGVCLGHQGIFHAFGGRVDQGEPVHGKIVEVFHDGSELFRDVPNPFRATRYHSLVCRPEDTPADIEVTAVTSDEIIMAIKHREYPVYGLQFHPESAGTPSGRTVIRNFLRM.

A Glutamine amidotransferase type-1 domain is found at 3–196 (VILIIDNYDS…RTVIRNFLRM (194 aa)). 60–62 (GPG) contributes to the L-glutamine binding site. The active-site Nucleophile; for GATase activity is the Cys-89. Residues Gln-93 and 138-139 (SL) each bind L-glutamine. Catalysis depends on for GATase activity residues His-177 and Glu-179.

In terms of assembly, heterotetramer consisting of two non-identical subunits: a beta subunit (TrpG) and a large alpha subunit (TrpE).

It catalyses the reaction chorismate + L-glutamine = anthranilate + pyruvate + L-glutamate + H(+). Its pathway is amino-acid biosynthesis; L-tryptophan biosynthesis; L-tryptophan from chorismate: step 1/5. In terms of biological role, part of a heterotetrameric complex that catalyzes the two-step biosynthesis of anthranilate, an intermediate in the biosynthesis of L-tryptophan. In the first step, the glutamine-binding beta subunit (TrpG) of anthranilate synthase (AS) provides the glutamine amidotransferase activity which generates ammonia as a substrate that, along with chorismate, is used in the second step, catalyzed by the large alpha subunit of AS (TrpE) to produce anthranilate. In the absence of TrpG, TrpE can synthesize anthranilate directly from chorismate and high concentrations of ammonia. The polypeptide is Anthranilate synthase component 2 (trpG) (Methanothermobacter thermautotrophicus (strain ATCC 29096 / DSM 1053 / JCM 10044 / NBRC 100330 / Delta H) (Methanobacterium thermoautotrophicum)).